Reading from the N-terminus, the 138-residue chain is Basic phospholipase A2 trimucrotoxin (138 aa).

The first 16 residues, 1 to 16 (MRTLWIVAVLLLGVEG), serve as a signal peptide directing secretion. 7 disulfides stabilise this stretch: Cys42–Cys131, Cys44–Cys60, Cys59–Cys111, Cys65–Cys138, Cys66–Cys104, Cys73–Cys97, and Cys91–Cys102. Ca(2+)-binding residues include Tyr43, Gly45, and Gly47. Residue His63 is part of the active site. Asp64 serves as a coordination point for Ca(2+). Asp105 is a catalytic residue.

The protein belongs to the phospholipase A2 family. Group II subfamily. D49 sub-subfamily. As to quaternary structure, homodimer. Requires Ca(2+) as cofactor. Expressed by the venom gland.

The protein localises to the secreted. It carries out the reaction a 1,2-diacyl-sn-glycero-3-phosphocholine + H2O = a 1-acyl-sn-glycero-3-phosphocholine + a fatty acid + H(+). In terms of biological role, snake venom phospholipase A2 (PLA2) that displays edema-inducing activities, as well as presynaptic neurotoxicity and low myotoxicity. PLA2 catalyzes the calcium-dependent hydrolysis of the 2-acyl groups in 3-sn-phosphoglycerides. This Protobothrops mucrosquamatus (Taiwan habu) protein is Basic phospholipase A2 trimucrotoxin.